The following is a 472-amino-acid chain: Ribulose bisphosphate carboxylase large chain (472 aa).

Substrate-binding residues include N115 and T165. The active-site Proton acceptor is the K167. K169 contacts substrate. Mg(2+) is bound by residues K193, D195, and E196. The residue at position 193 (K193) is an N6-carboxylysine. H286 (proton acceptor) is an active-site residue. Substrate is bound by residues R287, H319, and S371.

This sequence belongs to the RuBisCO large chain family. Type I subfamily. Heterohexadecamer of 8 large chains and 8 small chains. It depends on Mg(2+) as a cofactor.

The enzyme catalyses 2 (2R)-3-phosphoglycerate + 2 H(+) = D-ribulose 1,5-bisphosphate + CO2 + H2O. It carries out the reaction D-ribulose 1,5-bisphosphate + O2 = 2-phosphoglycolate + (2R)-3-phosphoglycerate + 2 H(+). RuBisCO catalyzes two reactions: the carboxylation of D-ribulose 1,5-bisphosphate, the primary event in carbon dioxide fixation, as well as the oxidative fragmentation of the pentose substrate. Both reactions occur simultaneously and in competition at the same active site. In Solemya velum gill symbiont, this protein is Ribulose bisphosphate carboxylase large chain.